Consider the following 830-residue polypeptide: Frameshifted structural polyprotein (830 aa).

Residues 58-109 (AIAPARPPKPKKKKTTKPKPKTQPKKINGKTQQQKKKDKQADKKKKKPGKRE) form a disordered region. Basic residues predominate over residues 65–107 (PKPKKKKTTKPKPKTQPKKINGKTQQQKKKDKQADKKKKKPGK). The ribosome-binding stretch occupies residues 94 to 106 (KDKQADKKKKKPG). The cysteines at positions 119 and 134 are disulfide-linked. A Peptidase S3 domain is found at 119-267 (CIFEVKHEGK…RVTPEGSEEW (149 aa)). Active-site charge relay system residues include histidine 145, aspartate 167, and serine 219. Residues asparagine 280, asparagine 327, asparagine 533, and asparagine 595 are each glycosylated (N-linked (GlcNAc...) asparagine; by host). The helical transmembrane segment at 702-722 (AVVGMSLLALISIFASCYMLV) threads the bilayer. Residues cysteine 718, cysteine 728, cysteine 748, and cysteine 749 are each lipidated (S-palmitoyl cysteine; by host). Residues 728 to 748 (CLTPYALTPGAAVPWTLGILC) are transient transmembrane before p62-6K protein processing. The next 2 membrane-spanning stretches (helical) occupy residues 771-791 (ALFWLEFAAPVACILIITYCL) and 793-813 (NVLCCCKSLSFLSATEPRGHR).

As to quaternary structure, homodimer. Homomultimer. Interacts with host karyopherin KPNA4; this interaction allows the nuclear import of the viral capsid protein. Precursor of protein E3/E2: The precursor of protein E3/E2 and E1 form a heterodimer shortly after synthesis. Interacts with host IRAK1; the interaction leads to inhibition of IRAK1-dependent signaling. In terms of assembly, processing of the precursor of protein E3/E2 into E2 and E3 results in a heterodimer of the spike glycoproteins E2 and E1. Spike at virion surface are constituted of three E2-E1 heterodimers. Interacts with 6K protein. Interacts with host MXRA8; this interaction mediates virus entry. Post-translationally, specific enzymatic cleavages in vivo yield mature proteins. Capsid protein is auto-cleaved during polyprotein translation, unmasking a signal peptide at the N-terminus of the precursor of E3/E2. The remaining polyprotein is then targeted to the host endoplasmic reticulum, where host signal peptidase cleaves it into pE2 and TF. pE2 is further processed to mature E3 and E2 by host furin in trans-Golgi vesicle.

It localises to the virion. It is found in the host cytoplasm. Its subcellular location is the host cell membrane. The protein resides in the host nucleus. The protein localises to the virion membrane. It catalyses the reaction Autocatalytic release of the core protein from the N-terminus of the togavirus structural polyprotein by hydrolysis of a -Trp-|-Ser- bond.. In terms of biological role, forms an icosahedral capsid with a T=4 symmetry composed of 240 copies of the capsid protein surrounded by a lipid membrane through which penetrate 80 spikes composed of trimers of E1-E2 heterodimers. The capsid protein binds to the viral RNA genome at a site adjacent to a ribosome binding site for viral genome translation following genome release. Possesses a protease activity that results in its autocatalytic cleavage from the nascent structural protein. Following its self-cleavage, the capsid protein transiently associates with ribosomes, and within several minutes the protein binds to viral RNA and rapidly assembles into icosahedric core particles. The resulting nucleocapsid eventually associates with the cytoplasmic domain of the spike glycoprotein E2 at the cell membrane, leading to budding and formation of mature virions. In case of infection, new virions attach to target cells and after clathrin-mediated endocytosis their membrane fuses with the host endosomal membrane. This leads to the release of the nucleocapsid into the cytoplasm, followed by an uncoating event necessary for the genomic RNA to become accessible. The uncoating might be triggered by the interaction of capsid proteins with ribosomes. Binding of ribosomes would release the genomic RNA since the same region is genomic RNA-binding and ribosome-binding. Specifically inhibits interleukin-1 receptor-associated kinase 1/IRAK1-dependent signaling during viral entry, representing a means by which the alphaviruses may evade innate immune detection and activation prior to viral gene expression. Its function is as follows. Provides the signal sequence for p62 (E3/E2) translocation to the host endoplasmic reticulum. Mediates pH protection of E1 during secretory pathway trans- port. Functionally, plays a role in viral attachment to target host cell, by binding to the cell receptor. Synthesized as a p62 precursor which is processed by furin at the cell membrane just before virion budding, giving rise to E2-E1 heterodimer. The p62-E1 heterodimer is stable, whereas E2-E1 is unstable and dissociate at low pH. p62 is processed at the last step, presumably to avoid E1 fusion activation before its final export to cell surface. E2 C-terminus contains a transitory transmembrane that would be disrupted by palmitoylation, resulting in reorientation of the C-terminal tail from lumenal to cytoplasmic side. This step is critical since E2 C-terminus is involved in budding by interacting with capsid proteins. This release of E2 C-terminus in cytoplasm occurs lately in protein export, and precludes premature assembly of particles at the endoplasmic reticulum membrane. Virion component that may play a role during viral assembly. In Aedes (Middle-African hedgehog), this protein is Frameshifted structural polyprotein.